A 465-amino-acid chain; its full sequence is tRNA-2-methylthio-N(6)-dimethylallyladenosine synthase (465 aa).

One can recognise an MTTase N-terminal domain in the interval 5-125 (RKLHIKSYGC…LPELLKRAGN (121 aa)). The [4Fe-4S] cluster site is built by cysteine 14, cysteine 50, cysteine 88, cysteine 166, cysteine 170, and cysteine 173. One can recognise a Radical SAM core domain in the interval 152–384 (RARGISAFVT…QELIDSQQSA (233 aa)). One can recognise a TRAM domain in the interval 387-449 (KAAIGSTVDV…RYSFLGELVT (63 aa)).

The protein belongs to the methylthiotransferase family. MiaB subfamily. As to quaternary structure, monomer. The cofactor is [4Fe-4S] cluster.

It localises to the cytoplasm. It catalyses the reaction N(6)-dimethylallyladenosine(37) in tRNA + (sulfur carrier)-SH + AH2 + 2 S-adenosyl-L-methionine = 2-methylsulfanyl-N(6)-dimethylallyladenosine(37) in tRNA + (sulfur carrier)-H + 5'-deoxyadenosine + L-methionine + A + S-adenosyl-L-homocysteine + 2 H(+). Functionally, catalyzes the methylthiolation of N6-(dimethylallyl)adenosine (i(6)A), leading to the formation of 2-methylthio-N6-(dimethylallyl)adenosine (ms(2)i(6)A) at position 37 in tRNAs that read codons beginning with uridine. The protein is tRNA-2-methylthio-N(6)-dimethylallyladenosine synthase of Bradyrhizobium diazoefficiens (strain JCM 10833 / BCRC 13528 / IAM 13628 / NBRC 14792 / USDA 110).